A 56-amino-acid polypeptide reads, in one-letter code: Putative zinc-binding protein YnfU (56 aa).

Residues cysteine 19, cysteine 22, cysteine 41, and cysteine 44 each contribute to the Zn(2+) site.

Zn(2+) is required as a cofactor.

This chain is Putative zinc-binding protein YnfU, found in Escherichia coli (strain K12).